The chain runs to 410 residues: Serine hydroxymethyltransferase (410 aa).

Residues Leu-119 and 123 to 125 (GHL) each bind (6S)-5,6,7,8-tetrahydrofolate. At Lys-228 the chain carries N6-(pyridoxal phosphate)lysine. (6S)-5,6,7,8-tetrahydrofolate is bound at residue 351-353 (SPF).

The protein belongs to the SHMT family. In terms of assembly, homodimer. It depends on pyridoxal 5'-phosphate as a cofactor.

It is found in the cytoplasm. The enzyme catalyses (6R)-5,10-methylene-5,6,7,8-tetrahydrofolate + glycine + H2O = (6S)-5,6,7,8-tetrahydrofolate + L-serine. Its pathway is one-carbon metabolism; tetrahydrofolate interconversion. The protein operates within amino-acid biosynthesis; glycine biosynthesis; glycine from L-serine: step 1/1. In terms of biological role, catalyzes the reversible interconversion of serine and glycine with tetrahydrofolate (THF) serving as the one-carbon carrier. This reaction serves as the major source of one-carbon groups required for the biosynthesis of purines, thymidylate, methionine, and other important biomolecules. Also exhibits THF-independent aldolase activity toward beta-hydroxyamino acids, producing glycine and aldehydes, via a retro-aldol mechanism. The polypeptide is Serine hydroxymethyltransferase (Alkaliphilus oremlandii (strain OhILAs) (Clostridium oremlandii (strain OhILAs))).